Consider the following 186-residue polypeptide: Meiotically up-regulated gene 163 protein (186 aa).

It localises to the mitochondrion. In terms of biological role, has a role in meiosis. The sequence is that of Meiotically up-regulated gene 163 protein (mug163) from Schizosaccharomyces pombe (strain 972 / ATCC 24843) (Fission yeast).